The chain runs to 182 residues: ADP-ribosylation factor 1 (182 aa).

Glycine 2 is lipidated: N-myristoyl glycine. Positions 3–16 (NVFANLFKGLFGKK) are important for the stable binding to the membranes. Residues 24–32 (GLDAAGKTT), 126–129 (NKQD), and alanine 160 each bind GTP.

Belongs to the small GTPase superfamily. Arf family.

It is found in the golgi apparatus membrane. It localises to the cytoplasm. The protein resides in the cytosol. The enzyme catalyses GTP + H2O = GDP + phosphate + H(+). Alternates between an inactive GDP-bound form and an active GTP-bound form. Activated by a guanine nucleotide-exchange factor (GEF) and inactivated by GTPase-activating protein (GAP). Functionally, small GTPase involved in protein trafficking between different compartments. Modulates vesicle budding and uncoating within the Golgi complex. In its GTP-bound form, triggers the recruitment of coatomer proteins to the Golgi membrane. The hydrolysis of ARF1-bound GTP, which is mediated by ARFGAPs proteins, is required for dissociation of coat proteins from Golgi membranes and vesicles. Has a role in eye development. Required for cleavage furrow ingression in embryonic cells. This Drosophila melanogaster (Fruit fly) protein is ADP-ribosylation factor 1.